Consider the following 335-residue polypeptide: Phospho-N-acetylmuramoyl-pentapeptide-transferase (335 aa).

The next 10 helical transmembrane spans lie at 3-23 (LTIL…PHFI), 53-73 (GGTV…LVYF), 78-98 (SLGL…IGFL), 118-138 (FTLQ…PSGI), 143-163 (VFGY…FWVV), 174-194 (GIDG…GVIA), 200-220 (FDVL…FLFN), 226-246 (IFMG…ISIA), 251-271 (WTLL…MLQV), and 314-334 (VDAF…AILY).

This sequence belongs to the glycosyltransferase 4 family. MraY subfamily. Requires Mg(2+) as cofactor.

Its subcellular location is the cell membrane. It catalyses the reaction UDP-N-acetyl-alpha-D-muramoyl-L-alanyl-gamma-D-glutamyl-L-lysyl-D-alanyl-D-alanine + di-trans,octa-cis-undecaprenyl phosphate = Mur2Ac(oyl-L-Ala-gamma-D-Glu-L-Lys-D-Ala-D-Ala)-di-trans,octa-cis-undecaprenyl diphosphate + UMP. It functions in the pathway cell wall biogenesis; peptidoglycan biosynthesis. In terms of biological role, catalyzes the initial step of the lipid cycle reactions in the biosynthesis of the cell wall peptidoglycan: transfers peptidoglycan precursor phospho-MurNAc-pentapeptide from UDP-MurNAc-pentapeptide onto the lipid carrier undecaprenyl phosphate, yielding undecaprenyl-pyrophosphoryl-MurNAc-pentapeptide, known as lipid I. This Streptococcus equi subsp. zooepidemicus (strain MGCS10565) protein is Phospho-N-acetylmuramoyl-pentapeptide-transferase.